Here is a 211-residue protein sequence, read N- to C-terminus: Imidazole glycerol phosphate synthase subunit HisH (211 aa).

A Glutamine amidotransferase type-1 domain is found at 1–211; the sequence is MIGIIDYGMG…VGIATGRGNG (211 aa). Catalysis depends on Cys-79, which acts as the Nucleophile. Residues His-186 and Glu-188 contribute to the active site.

Heterodimer of HisH and HisF.

The protein resides in the cytoplasm. It carries out the reaction 5-[(5-phospho-1-deoxy-D-ribulos-1-ylimino)methylamino]-1-(5-phospho-beta-D-ribosyl)imidazole-4-carboxamide + L-glutamine = D-erythro-1-(imidazol-4-yl)glycerol 3-phosphate + 5-amino-1-(5-phospho-beta-D-ribosyl)imidazole-4-carboxamide + L-glutamate + H(+). It catalyses the reaction L-glutamine + H2O = L-glutamate + NH4(+). It participates in amino-acid biosynthesis; L-histidine biosynthesis; L-histidine from 5-phospho-alpha-D-ribose 1-diphosphate: step 5/9. Its function is as follows. IGPS catalyzes the conversion of PRFAR and glutamine to IGP, AICAR and glutamate. The HisH subunit catalyzes the hydrolysis of glutamine to glutamate and ammonia as part of the synthesis of IGP and AICAR. The resulting ammonia molecule is channeled to the active site of HisF. This Geobacillus kaustophilus (strain HTA426) protein is Imidazole glycerol phosphate synthase subunit HisH.